We begin with the raw amino-acid sequence, 88 residues long: Small ribosomal subunit protein uS19 (88 aa).

This sequence belongs to the universal ribosomal protein uS19 family.

In terms of biological role, protein S19 forms a complex with S13 that binds strongly to the 16S ribosomal RNA. The polypeptide is Small ribosomal subunit protein uS19 (Chlamydia caviae (strain ATCC VR-813 / DSM 19441 / 03DC25 / GPIC) (Chlamydophila caviae)).